A 333-amino-acid chain; its full sequence is MELFKHFLQSTASDVFVSPVSISAVLAVLLEGAKGRTAAQLRLALEPRYSHLDKVTVASRVYGDWRLDIKPKFMQAVRDRFELVNFNHSPEKIKDDINRWVAARTNNKILNAVNSISPDTKLLIVAAIYFEVAWRNQFVPDFTIEGEFWVTKDVSKTVRMMTLSDDFRFVDVRNEGIKMIELPYEYGYSMLVIIPDDLEQVERHLSLMKVISWLKMSTLRYVHLSFPKFKMETSYTLNEALATSGVTDIFAHPNFEDMTDDKNVAVSDIFHKAYIEVTEFGTTAASCTYGCVTDFGGTMDPVVLKVNKPFIFIIKHDDTFSLLFLGRVTSPNY.

This sequence belongs to the serpin family. Poxviruses subfamily.

It is found in the host cytoplasm. Weak inhibitor of the interleukin-1-beta converting enzyme (ICE) and of granzyme B. Does not form a stable complex with ICE, but can for a stable complex with granzyme B. The chain is Serine proteinase inhibitor 2 (SERP2) from Myxoma virus (strain Uriarra) (MYXV).